The chain runs to 172 residues: Small integral membrane protein 23 (172 aa).

The Cytoplasmic portion of the chain corresponds to 1 to 36 (MATQQVDSRRQVAAEQVAAQLLERRRGSHCDDEKQT). A helical; Signal-anchor for type II membrane protein transmembrane segment spans residues 37-53 (LLALLILVLYLSTEIWG). Over 54–172 (SSWEVSERIR…LEISLSGAEL (119 aa)) the chain is Extracellular. Positions 96 to 128 (LKEKLHVFSEKLEEEVQQLEQLAWDLELWLDAL) form a coiled coil.

The protein localises to the cell membrane. This is Small integral membrane protein 23 (SMIM23) from Homo sapiens (Human).